Consider the following 153-residue polypeptide: Large ribosomal subunit protein uL15 (153 aa).

A disordered region spans residues 21–40 (RGIGSGKGKTGGRGIKGQKS). The segment covering 23–35 (IGSGKGKTGGRGI) has biased composition (gly residues).

The protein belongs to the universal ribosomal protein uL15 family. As to quaternary structure, part of the 50S ribosomal subunit.

In terms of biological role, binds to the 23S rRNA. This is Large ribosomal subunit protein uL15 from Rickettsia canadensis (strain McKiel).